Consider the following 60-residue polypeptide: Potassium channel toxin-like Tx677 (60 aa).

Residues 1 to 22 (MKISALVMITLLICSMMILCQG) form the signal peptide. 3 disulfides stabilise this stretch: Cys-30/Cys-51, Cys-36/Cys-56, and Cys-40/Cys-58.

This sequence belongs to the short scorpion toxin superfamily. Potassium channel inhibitor family. Expressed by the venom gland.

The protein localises to the secreted. In terms of biological role, weakly inhibits Kv11.1/KCNH2/ERG1, Kv1.2/KCNA2 and Kv1.3/KCNA3 voltage-gated potassium channels. This is Potassium channel toxin-like Tx677 from Buthus israelis (Israeli scorpion).